The chain runs to 553 residues: MRSDTIKQGIERTPHRALIKGTGVPQSEMAKPFIGVATSFTDLIPGHVGMRDLERFIEKGIHSGGGYAFFFGIPGVCDGIAMGHKGMHYSLPTRELIADMVESVAEAHRLDGLVLLTNCDKITPGMLMAAARLDIPTIVVTAGPMMAGRGVEGRRFSFVTDTFEAMARYKAGVIDAKELQVCEDNACPGMGSCQGLFTANTMAILTETLGMSLPRCGTALAVSALKRRIAFASGEKIVDLVRNGVTPRQILTRAAFENAIRVDLALGGSSNTVLHLLAIAREAGVDLPLETFDILSKETPQIASMNPAGEYFMEDLDAAGGVVGVLKQLGGTIKDSPTVLGLTTRELASTVESVDERVIRPVSDPVKKEGGIAVLFGNLAPKGAVVKQSGVSAPMMQFEGTARCFDSEELAMAALMGGKITSGDVVVIRYEGPKGGPGMREMLAPTATLMGLGLGDSVALVTDGRFSGGTRGPCIGHISPEAAEGGPIALVEEGDRIRLDIPNRKLELLVDESILAERRSRWVAPEPKIKTGWLARYAKVVTSAYTGAVTTAE.

A Mg(2+)-binding site is contributed by Asp78. Cys119 serves as a coordination point for [2Fe-2S] cluster. Mg(2+) is bound by residues Asp120 and Lys121. Residue Lys121 is modified to N6-carboxylysine. Residue Cys193 coordinates [2Fe-2S] cluster. Residue Glu441 coordinates Mg(2+). Ser467 (proton acceptor) is an active-site residue.

It belongs to the IlvD/Edd family. In terms of assembly, homodimer. The cofactor is [2Fe-2S] cluster. It depends on Mg(2+) as a cofactor.

It catalyses the reaction (2R)-2,3-dihydroxy-3-methylbutanoate = 3-methyl-2-oxobutanoate + H2O. The catalysed reaction is (2R,3R)-2,3-dihydroxy-3-methylpentanoate = (S)-3-methyl-2-oxopentanoate + H2O. It participates in amino-acid biosynthesis; L-isoleucine biosynthesis; L-isoleucine from 2-oxobutanoate: step 3/4. It functions in the pathway amino-acid biosynthesis; L-valine biosynthesis; L-valine from pyruvate: step 3/4. In terms of biological role, functions in the biosynthesis of branched-chain amino acids. Catalyzes the dehydration of (2R,3R)-2,3-dihydroxy-3-methylpentanoate (2,3-dihydroxy-3-methylvalerate) into 2-oxo-3-methylpentanoate (2-oxo-3-methylvalerate) and of (2R)-2,3-dihydroxy-3-methylbutanoate (2,3-dihydroxyisovalerate) into 2-oxo-3-methylbutanoate (2-oxoisovalerate), the penultimate precursor to L-isoleucine and L-valine, respectively. The polypeptide is Dihydroxy-acid dehydratase (Geobacter metallireducens (strain ATCC 53774 / DSM 7210 / GS-15)).